A 697-amino-acid chain; its full sequence is Envelope glycoprotein G (697 aa).

The N-terminal stretch at 1 to 22 (MHAIAPRLLLLFVLSGLPGTRG) is a signal peptide. The Virion surface portion of the chain corresponds to 23–648 (GSGVPGPINP…WFLTASPALD (626 aa)). N-linked (GlcNAc...) asparagine; by host glycosylation is found at N104 and N163. Disordered stretches follow at residues 298 to 389 (HWAP…TTPP) and 402 to 630 (TPEE…PSGP). The span at 322-335 (LRTDPEGVDPDVRA) shows a compositional bias: basic and acidic residues. Low complexity-rich tracts occupy residues 375 to 389 (DPSAEPTAPATTTPP) and 402 to 445 (TPEE…AKTP). N-linked (GlcNAc...) asparagine; by host glycosylation occurs at N435. 2 stretches are compositionally biased toward pro residues: residues 446 to 457 (PTTPAPTTPPPT) and 465 to 480 (PTTPGPQTTPPGPATP). Positions 481–529 (GPVGASAAPTADSPLTALPPATAPGPSAANVSVAATTATPGTRGTARTP) are enriched in low complexity. An N-linked (GlcNAc...) asparagine; by host glycan is attached at N510. Pro residues predominate over residues 542–552 (DAPPGSPAPPP). Residues 560 to 576 (EEFEGAGDGEPPEDDDS) show a composition bias toward acidic residues. Residues 587 to 603 (PNKPPPARPGPIRPTLP) are compositionally biased toward pro residues. A helical membrane pass occupies residues 649-669 (ILFIISTTIHTAAFVCLVALA). The Intravirion segment spans residues 670-697 (AQLWRGRAGRRRYAHPSVRYVCLPPERD).

It belongs to the alphaherpesvirinae glycoprotein G family.

The protein resides in the virion membrane. Its function is as follows. Chemokine-binding protein that inhibits neutrophils' chemotaxis. The sequence is that of Envelope glycoprotein G (gG) from Homo sapiens (Human).